A 199-amino-acid polypeptide reads, in one-letter code: Protein MA_3591 (199 aa).

Residues 5-196 (TEGRVAVKLA…EKEPEGEVIE (192 aa)) enclose the AMMECR1 domain.

In Methanosarcina acetivorans (strain ATCC 35395 / DSM 2834 / JCM 12185 / C2A), this protein is Protein MA_3591.